Reading from the N-terminus, the 299-residue chain is Xyloglucan endotransglucosylase protein 6 (299 aa).

The N-terminal stretch at 1 to 25 (MASSLTLPMAMAFTLLALSFASAMG) is a signal peptide. In terms of domain architecture, GH16 spans 26–219 (GSMNSSRFDE…WSHAPFVASY (194 aa)). Glu105 functions as the Nucleophile in the catalytic mechanism. The active-site Proton donor is Glu109. Glu109 is a xyloglucan binding site. Asn113 carries an N-linked (GlcNAc...) asparagine glycan. Xyloglucan contacts are provided by residues 122-124 (QTN), 132-134 (NRE), 198-199 (DW), and Gly203. Intrachain disulfides connect Cys227-Cys242 and Cys281-Cys294. Arg286 lines the xyloglucan pocket.

This sequence belongs to the glycosyl hydrolase 16 family. XTH group 1 subfamily. Post-translationally, contains at least one intrachain disulfide bond essential for its enzymatic activity. In terms of tissue distribution, highest expression in ripe leaves after full expansion. Also expressed in fruits, and at a lower level in flowers and stems (picked at anthesis).

The protein resides in the secreted. The protein localises to the cell wall. Its subcellular location is the extracellular space. It is found in the apoplast. The catalysed reaction is breaks a beta-(1-&gt;4) bond in the backbone of a xyloglucan and transfers the xyloglucanyl segment on to O-4 of the non-reducing terminal glucose residue of an acceptor, which can be a xyloglucan or an oligosaccharide of xyloglucan.. Its function is as follows. Catalyzes xyloglucan endotransglycosylation (XET). Cleaves and religates xyloglucan polymers. Does not catalyze xyloglucan endohydrolysis (XEH). Probably involved in cell wall restructuring during postharvest fruit softening. This Diospyros kaki (Kaki persimmon) protein is Xyloglucan endotransglucosylase protein 6.